A 142-amino-acid chain; its full sequence is 3-hydroxyacyl-[acyl-carrier-protein] dehydratase FabZ (142 aa).

His47 is an active-site residue.

Belongs to the thioester dehydratase family. FabZ subfamily.

The protein localises to the cytoplasm. The catalysed reaction is a (3R)-hydroxyacyl-[ACP] = a (2E)-enoyl-[ACP] + H2O. Functionally, involved in unsaturated fatty acids biosynthesis. Catalyzes the dehydration of short chain beta-hydroxyacyl-ACPs and long chain saturated and unsaturated beta-hydroxyacyl-ACPs. The sequence is that of 3-hydroxyacyl-[acyl-carrier-protein] dehydratase FabZ from Thermoanaerobacter sp. (strain X514).